The primary structure comprises 189 residues: dTTP/UTP pyrophosphatase (189 aa).

Asp-70 functions as the Proton acceptor in the catalytic mechanism.

This sequence belongs to the Maf family. YhdE subfamily. A divalent metal cation is required as a cofactor.

It localises to the cytoplasm. It catalyses the reaction dTTP + H2O = dTMP + diphosphate + H(+). The enzyme catalyses UTP + H2O = UMP + diphosphate + H(+). Nucleoside triphosphate pyrophosphatase that hydrolyzes dTTP and UTP. May have a dual role in cell division arrest and in preventing the incorporation of modified nucleotides into cellular nucleic acids. This Akkermansia muciniphila (strain ATCC BAA-835 / DSM 22959 / JCM 33894 / BCRC 81048 / CCUG 64013 / CIP 107961 / Muc) protein is dTTP/UTP pyrophosphatase.